We begin with the raw amino-acid sequence, 370 residues long: Phospho-2-dehydro-3-deoxyheptonate aldolase, tyrosine-inhibited (370 aa).

Belongs to the class-I DAHP synthase family.

The catalysed reaction is D-erythrose 4-phosphate + phosphoenolpyruvate + H2O = 7-phospho-2-dehydro-3-deoxy-D-arabino-heptonate + phosphate. It functions in the pathway metabolic intermediate biosynthesis; chorismate biosynthesis; chorismate from D-erythrose 4-phosphate and phosphoenolpyruvate: step 1/7. Inhibited by tyrosine. In terms of biological role, stereospecific condensation of phosphoenolpyruvate (PEP) and D-erythrose-4-phosphate (E4P) giving rise to 3-deoxy-D-arabino-heptulosonate-7-phosphate (DAHP). The protein is Phospho-2-dehydro-3-deoxyheptonate aldolase, tyrosine-inhibited (ARO4) of Candida albicans (strain SC5314 / ATCC MYA-2876) (Yeast).